Here is a 213-residue protein sequence, read N- to C-terminus: Charged multivesicular body protein 2b (213 aa).

An N-acetylalanine modification is found at alanine 2. A coiled-coil region spans residues 25 to 55; the sequence is QRAIIRDRAALEKQEKQLELEIKKMAKIGNK. The tract at residues 178–202 is disordered; sequence MAKAPSAARSLPSASTSKSTISDEE. Residues 179–194 show a composition bias toward low complexity; that stretch reads AKAPSAARSLPSASTS. The residue at position 199 (serine 199) is a Phosphoserine. The MIT-interacting motif signature appears at 201–211; sequence EEIERQLKALG.

The protein belongs to the SNF7 family. In terms of assembly, probable core component of the endosomal sorting required for transport complex III (ESCRT-III). ESCRT-III components are thought to multimerize to form a flat lattice on the perimeter membrane of the endosome. Several assembly forms of ESCRT-III may exist that interact and act sequentially. Interacts with CHMP2A. Interacts with VPS4A. Interacts with VPS4B; the interaction is direct.

The protein resides in the cytoplasm. It localises to the cytosol. Its subcellular location is the late endosome membrane. Its function is as follows. Probable core component of the endosomal sorting required for transport complex III (ESCRT-III) which is involved in multivesicular bodies (MVBs) formation and sorting of endosomal cargo proteins into MVBs. MVBs contain intraluminal vesicles (ILVs) that are generated by invagination and scission from the limiting membrane of the endosome and mostly are delivered to lysosomes enabling degradation of membrane proteins, such as stimulated growth factor receptors, lysosomal enzymes and lipids. The MVB pathway appears to require the sequential function of ESCRT-O, -I,-II and -III complexes. ESCRT-III proteins mostly dissociate from the invaginating membrane before the ILV is released. The ESCRT machinery also functions in topologically equivalent membrane fission events, such as the terminal stages of cytokinesis and the budding of enveloped viruses (lentiviruses). ESCRT-III proteins are believed to mediate the necessary vesicle extrusion and/or membrane fission activities, possibly in conjunction with the AAA ATPase VPS4. The sequence is that of Charged multivesicular body protein 2b (CHMP2B) from Bos taurus (Bovine).